We begin with the raw amino-acid sequence, 292 residues long: 4-hydroxy-tetrahydrodipicolinate synthase (292 aa).

A pyruvate-binding site is contributed by Thr45. Tyr133 (proton donor/acceptor) is an active-site residue. Lys161 functions as the Schiff-base intermediate with substrate in the catalytic mechanism. Ile203 contacts pyruvate.

This sequence belongs to the DapA family. In terms of assembly, homodimer.

Its subcellular location is the cytoplasm. It catalyses the reaction L-aspartate 4-semialdehyde + pyruvate = (2S,4S)-4-hydroxy-2,3,4,5-tetrahydrodipicolinate + H2O + H(+). It functions in the pathway amino-acid biosynthesis; L-lysine biosynthesis via DAP pathway; (S)-tetrahydrodipicolinate from L-aspartate: step 3/4. Its function is as follows. Catalyzes the condensation of (S)-aspartate-beta-semialdehyde [(S)-ASA] and pyruvate to 4-hydroxy-tetrahydrodipicolinate (HTPA). The polypeptide is 4-hydroxy-tetrahydrodipicolinate synthase (Pseudomonas savastanoi pv. phaseolicola (strain 1448A / Race 6) (Pseudomonas syringae pv. phaseolicola (strain 1448A / Race 6))).